The chain runs to 195 residues: Protein LIGHT-DEPENDENT SHORT HYPOCOTYLS 7 (195 aa).

Disordered stretches follow at residues 1-41 and 154-195; these read MASH…LSRY and SQAK…NLAS. Residues 21–36 show a composition bias toward pro residues; sequence QPQPQPHQPQSPPNPP. The region spanning 40–167 is the ALOG domain; the sequence is RYESQKRRDW…ARGVPYKKRK (128 aa). Basic residues predominate over residues 162-175; the sequence is PYKKRKKRKKRNPM. The short motif at 165 to 169 is the Nuclear localization signal element; that stretch reads KRKKR. Positions 184 to 195 are enriched in low complexity; that stretch reads TTGTSSSSNLAS.

The protein belongs to the plant homeotic and developmental regulators ALOG protein family.

The protein localises to the nucleus. Functionally, probable transcription regulator that acts as a developmental regulator by promoting cell growth in response to light. The chain is Protein LIGHT-DEPENDENT SHORT HYPOCOTYLS 7 (LSH7) from Arabidopsis thaliana (Mouse-ear cress).